The sequence spans 213 residues: Ras-related protein Rab-25 (213 aa).

The GTP site is built by S21, G24, K25, T26, N27, S38, H39, T43, and T44. T26 lines the Mg(2+) pocket. 2 consecutive short sequence motifs (switch) follow at residues 35 to 49 (NEFS…GVEF) and 67 to 84 (DTAG…YYRG). Mg(2+) is bound by residues T44 and D67. Positions 70, 125, 126, 128, 156, and 157 each coordinate GTP. Residues C209 and C210 are each lipidated (S-geranylgeranyl cysteine). C210 carries the cysteine methyl ester modification. Residues 211–213 (ISL) constitute a propeptide, removed in mature form.

It belongs to the small GTPase superfamily. Rab family. Interacts (GTP-bound form) with RAB11FIP1, RAB11FIP2, RAB11FIP3 and RAB11FIP4. Interacts (via the hypervariable C-terminal region) with ITGB1 (via the cytoplasmic region); the interaction is GTP-dependent. Interacts with ITGAV. Associates with the integrin alpha-V/beta-1 heterodimer. Interacts with VPS33B. Mg(2+) serves as cofactor.

The protein localises to the cell membrane. Its subcellular location is the cell projection. The protein resides in the pseudopodium membrane. It localises to the cytoplasmic vesicle. The enzyme catalyses GTP + H2O = GDP + phosphate + H(+). Regulated by guanine nucleotide exchange factors (GEFs) which promote the exchange of bound GDP for free GTP. Regulated by GTPase activating proteins (GAPs) which increase the GTP hydrolysis activity. Inhibited by GDP dissociation inhibitors (GDIs) which prevent Rab-GDP dissociation. The small GTPases Rab are key regulators of intracellular membrane trafficking, from the formation of transport vesicles to their fusion with membranes. Rabs cycle between an inactive GDP-bound form and an active GTP-bound form that is able to recruit to membranes different set of downstream effectors directly responsible for vesicle formation, movement, tethering and fusion. RAB25 regulates epithelial cell differentiation, proliferation and survival, thereby playing key roles in tumorigenesis. Promotes invasive migration of cells in which it functions to localize and maintain integrin alpha-V/beta-1 at the tips of extending pseudopodia. Involved in the regulation of epithelial morphogenesis through the control of CLDN4 expression and localization at tight junctions. May selectively regulate the apical recycling pathway. Together with MYO5B regulates transcytosis. The chain is Ras-related protein Rab-25 from Mus musculus (Mouse).